The chain runs to 158 residues: MLYLTQRLEIPSAATASVTLPIDVRVKSRVKVTLNDGREAGLLLPRGLLLRGGDVLSNEEGTEFVQVIAADEGVSVVRCDDPFMLAKACYHLGNRHVPLQIMPGELRYHHDHVLDDMLRQFGLTVTFGQLPFEPEAGAYASESHGHHHAHHDHHAHSH.

The protein belongs to the UreE family.

It is found in the cytoplasm. Functionally, involved in urease metallocenter assembly. Binds nickel. Probably functions as a nickel donor during metallocenter assembly. This is Urease accessory protein UreE from Klebsiella pneumoniae subsp. pneumoniae (strain ATCC 700721 / MGH 78578).